A 286-amino-acid chain; its full sequence is tRNA(Ile)-lysidine synthase (286 aa).

7-12 (SGGPDS) lines the ATP pocket.

It belongs to the tRNA(Ile)-lysidine synthase family.

The protein localises to the cytoplasm. It carries out the reaction cytidine(34) in tRNA(Ile2) + L-lysine + ATP = lysidine(34) in tRNA(Ile2) + AMP + diphosphate + H(+). Ligates lysine onto the cytidine present at position 34 of the AUA codon-specific tRNA(Ile) that contains the anticodon CAU, in an ATP-dependent manner. Cytidine is converted to lysidine, thus changing the amino acid specificity of the tRNA from methionine to isoleucine. This is tRNA(Ile)-lysidine synthase from Mycoplasmopsis pulmonis (strain UAB CTIP) (Mycoplasma pulmonis).